A 68-amino-acid polypeptide reads, in one-letter code: Coiled-coil domain-containing protein 179 (68 aa).

The tract at residues 11 to 68 (SQVNPEGPRQHHPSEVTERQLANKRIQNMQHLKKEKRRLNKRFSRPSPIPEPGLLWSS) is disordered. Residues 18–28 (PRQHHPSEVTE) show a composition bias toward basic and acidic residues. The stretch at 27–53 (TERQLANKRIQNMQHLKKEKRRLNKRF) forms a coiled coil. Over residues 41-54 (HLKKEKRRLNKRFS) the composition is skewed to basic residues.

In Homo sapiens (Human), this protein is Coiled-coil domain-containing protein 179 (CCDC179).